Here is a 947-residue protein sequence, read N- to C-terminus: Protein translocase subunit SecA (947 aa).

ATP contacts are provided by residues Gln85, 103–107 (GEGKT), and Asp514. The tract at residues 864 to 947 (AAPSLDKGAQ…QAKGGRRRKK (84 aa)) is disordered. Positions 884 to 900 (PEIRAKGLDAPQRRDLH) are enriched in basic and acidic residues. The segment covering 934–947 (ERRKQAKGGRRRKK) has biased composition (basic residues).

This sequence belongs to the SecA family. As to quaternary structure, monomer and homodimer. Part of the essential Sec protein translocation apparatus which comprises SecA, SecYEG and auxiliary proteins SecDF. Other proteins may also be involved.

It localises to the cell membrane. It is found in the cytoplasm. It catalyses the reaction ATP + H2O + cellular proteinSide 1 = ADP + phosphate + cellular proteinSide 2.. Its function is as follows. Part of the Sec protein translocase complex. Interacts with the SecYEG preprotein conducting channel. Has a central role in coupling the hydrolysis of ATP to the transfer of proteins into and across the cell membrane, serving as an ATP-driven molecular motor driving the stepwise translocation of polypeptide chains across the membrane. The protein is Protein translocase subunit SecA of Streptomyces lividans.